Consider the following 712-residue polypeptide: Protein TAPT1 homolog (712 aa).

Residues 1–21 (MNNVPSTSRENSRNPSESSSS) are compositionally biased toward low complexity. 2 disordered regions span residues 1-22 (MNNV…SSSI) and 44-66 (ITMS…EIET). Helical transmembrane passes span 196 to 216 (FFYL…GALL), 222 to 242 (TSAE…SMLI), 305 to 325 (TCGH…LVIL), 379 to 399 (HIFA…NWNI), 402 to 422 (FTEM…VDWL), 470 to 490 (GFIP…TFTL), and 497 to 517 (IIFG…GVVM). Basic and acidic residues predominate over residues 596–619 (EIRRSTDRETAVSHLTARSDERTP). A disordered region spans residues 596 to 712 (EIRRSTDRET…MPEQGVQRIE (117 aa)). Over residues 656 to 667 (TENNTNSNSEQA) the composition is skewed to polar residues. The span at 675–692 (TAAPVTSSASTNTNATSS) shows a compositional bias: low complexity.

It belongs to the TAPT1 family.

The protein resides in the membrane. In Caenorhabditis elegans, this protein is Protein TAPT1 homolog.